We begin with the raw amino-acid sequence, 536 residues long: Heat shock factor protein 2 (536 aa).

Residues lysine 2 and lysine 82 each participate in a glycyl lysine isopeptide (Lys-Gly) (interchain with G-Cter in SUMO2) cross-link. Residues 7-112 (VPAFLSKLWT…LLENIKRKVS (106 aa)) mediate DNA binding. Residues 108 to 122 (KRKVSSSKPEENKIR) carry the Nuclear localization signal motif. The interval 119–192 (NKIRQEDLTK…VTLVQNNQLV (74 aa)) is hydrophobic repeat HR-A/B. Glycyl lysine isopeptide (Lys-Gly) (interchain with G-Cter in SUMO2) cross-links involve residues lysine 135, lysine 139, lysine 151, lysine 210, lysine 218, and lysine 237. Residues 195-210 (KRKRPLLLNTNGAQKK) carry the Nuclear localization signal motif. The interval 300–337 (QSGEQNEPARESLSSGSDGSSPLMSSAVQLNGSSSLTS) is disordered. The span at 311–325 (SLSSGSDGSSPLMSS) shows a compositional bias: low complexity. Polar residues predominate over residues 326–337 (AVQLNGSSSLTS). The tract at residues 360–385 (LLDYLDSIDCSLEDFQAMLSGRQFSI) is hydrophobic repeat HR-C. The tract at residues 407 to 438 (NNTKSENKGLETTKNNVVQPVSEEGRKSKSKP) is disordered. The segment covering 429–438 (EEGRKSKSKP) has biased composition (basic and acidic residues).

It belongs to the HSF family. As to quaternary structure, DNA-binding homotrimer in stressed or heat shocked cells, otherwise found as a homodimer.

The protein resides in the cytoplasm. Its subcellular location is the nucleus. In terms of biological role, DNA-binding protein that specifically binds heat shock promoter elements (HSE) and activates transcription. In higher eukaryotes, HSF is unable to bind to the HSE unless the cells are heat shocked. This is Heat shock factor protein 2 (HSF2) from Homo sapiens (Human).